Here is a 380-residue protein sequence, read N- to C-terminus: Actinidain (380 aa).

Residues 1 to 24 (MGLPKSFVSMSLLFFSTLLILSLA) form the signal peptide. A propeptide spans 25–126 (FNAKNLTQRT…NRYEPRVGQV (102 aa)) (activation peptide). Residues Asn-29, Asn-81, and Asn-111 are each glycosylated (N-linked (GlcNAc...) asparagine). 3 cysteine pairs are disulfide-bonded: Cys-148-Cys-191, Cys-182-Cys-224, and Cys-282-Cys-332. The active site involves Cys-151. Catalysis depends on residues His-288 and Asn-308.

The protein belongs to the peptidase C1 family. Fruit, present in small cells of the outer pericarp of mature fruit, but not large cells.

The enzyme catalyses Specificity close to that of papain.. Its function is as follows. Cysteine protease responsible for the cleavage of kiwellin into kissper and KiTH. This Actinidia deliciosa (Kiwi) protein is Actinidain.